A 324-amino-acid polypeptide reads, in one-letter code: Beta-ketoacyl-[acyl-carrier-protein] synthase III (324 aa).

Active-site residues include Cys-114 and His-251. Residues 252–256 (QANKR) are ACP-binding. Asn-281 is a catalytic residue.

The protein belongs to the thiolase-like superfamily. FabH family. As to quaternary structure, homodimer.

It localises to the cytoplasm. It carries out the reaction malonyl-[ACP] + acetyl-CoA + H(+) = 3-oxobutanoyl-[ACP] + CO2 + CoA. Its pathway is lipid metabolism; fatty acid biosynthesis. Catalyzes the condensation reaction of fatty acid synthesis by the addition to an acyl acceptor of two carbons from malonyl-ACP. Catalyzes the first condensation reaction which initiates fatty acid synthesis and may therefore play a role in governing the total rate of fatty acid production. Possesses both acetoacetyl-ACP synthase and acetyl transacylase activities. Its substrate specificity determines the biosynthesis of branched-chain and/or straight-chain of fatty acids. In Bradyrhizobium sp. (strain BTAi1 / ATCC BAA-1182), this protein is Beta-ketoacyl-[acyl-carrier-protein] synthase III.